A 400-amino-acid chain; its full sequence is ATP phosphoribosyltransferase regulatory subunit (400 aa).

This sequence belongs to the class-II aminoacyl-tRNA synthetase family. HisZ subfamily. As to quaternary structure, heteromultimer composed of HisG and HisZ subunits.

The protein resides in the cytoplasm. Its pathway is amino-acid biosynthesis; L-histidine biosynthesis; L-histidine from 5-phospho-alpha-D-ribose 1-diphosphate: step 1/9. In terms of biological role, required for the first step of histidine biosynthesis. May allow the feedback regulation of ATP phosphoribosyltransferase activity by histidine. The sequence is that of ATP phosphoribosyltransferase regulatory subunit from Hahella chejuensis (strain KCTC 2396).